The sequence spans 447 residues: Rab GDP dissociation inhibitor alpha (447 aa).

The protein belongs to the Rab GDI family. In terms of assembly, interacts with RHOH. Interacts with the non-phosphorylated forms of RAB1A, RAB3A, RAB5A, RAB5B, RAB5C, RAB8A, RAB8B, RAB10, RAB12, RAB35, and RAB43.

It is found in the cytoplasm. It localises to the golgi apparatus. The protein localises to the trans-Golgi network. Functionally, regulates the GDP/GTP exchange reaction of most Rab proteins by inhibiting the dissociation of GDP from them, and the subsequent binding of GTP to them. Promotes the dissociation of GDP-bound Rab proteins from the membrane and inhibits their activation. Promotes the dissociation of RAB1A, RAB3A, RAB5A and RAB10 from membranes. The sequence is that of Rab GDP dissociation inhibitor alpha (GDI1) from Pongo pygmaeus (Bornean orangutan).